A 1026-amino-acid chain; its full sequence is Isoleucine--tRNA ligase (1026 aa).

A 'HIGH' region motif is present at residues 51 to 61 (PTANGRPHIGH). The short motif at 591–595 (KMSKS) is the 'KMSKS' region element. K594 is a binding site for ATP.

It belongs to the class-I aminoacyl-tRNA synthetase family. IleS type 2 subfamily. In terms of assembly, monomer. Requires Zn(2+) as cofactor.

It localises to the cytoplasm. It carries out the reaction tRNA(Ile) + L-isoleucine + ATP = L-isoleucyl-tRNA(Ile) + AMP + diphosphate. In terms of biological role, catalyzes the attachment of isoleucine to tRNA(Ile). As IleRS can inadvertently accommodate and process structurally similar amino acids such as valine, to avoid such errors it has two additional distinct tRNA(Ile)-dependent editing activities. One activity is designated as 'pretransfer' editing and involves the hydrolysis of activated Val-AMP. The other activity is designated 'posttransfer' editing and involves deacylation of mischarged Val-tRNA(Ile). The protein is Isoleucine--tRNA ligase of Thermoplasma acidophilum (strain ATCC 25905 / DSM 1728 / JCM 9062 / NBRC 15155 / AMRC-C165).